The sequence spans 369 residues: GDSL esterase/lipase At5g42170 (369 aa).

The N-terminal stretch at 1 to 16 (MSRLVYVIFLLVVVEG) is a signal peptide. N-linked (GlcNAc...) asparagine glycosylation is found at Asn-28 and Asn-45. The Nucleophile role is filled by Ser-57. 2 N-linked (GlcNAc...) asparagine glycosylation sites follow: Asn-203 and Asn-336. Residues Asp-344 and His-347 contribute to the active site.

This sequence belongs to the 'GDSL' lipolytic enzyme family.

It is found in the secreted. This Arabidopsis thaliana (Mouse-ear cress) protein is GDSL esterase/lipase At5g42170.